The sequence spans 202 residues: Guanylyl cyclase-activating protein 1 (202 aa).

Glycine 2 carries N-myristoyl glycine lipidation. Asparagine 3 carries the deamidated asparagine modification. EF-hand domains lie at 31 to 49, 51 to 86, 87 to 122, and 131 to 166; these read SGQLTLYEFRQFFGLKNLS, SASQYVEQMFETFDFNKDGYIDFMEYVAALSLVLKG, KVEQKLRWYFKLYDVDGNGCIDRDELLTIIRAIRTI, and SAEEFTDTVFAKIDINGDGELSLEEFMEGVQKDQML. Residues aspartate 64, asparagine 66, aspartate 68, tyrosine 70, glutamate 75, aspartate 100, aspartate 102, asparagine 104, cysteine 106, glutamate 111, aspartate 144, asparagine 146, aspartate 148, glutamate 150, and glutamate 155 each coordinate Ca(2+).

In terms of assembly, homodimer. As to expression, in the retina, expressed in rod photoreceptors (at protein level). Expressed in cone photoreceptors.

It localises to the membrane. Its subcellular location is the photoreceptor inner segment. The protein resides in the cell projection. It is found in the cilium. The protein localises to the photoreceptor outer segment. Stimulates retinal guanylyl cyclase when free calcium ions concentration is low and inhibits guanylyl cyclase when free calcium ions concentration is elevated. This Ca(2+)-sensitive regulation of retinal guanylyl cyclase is a key event in recovery of the dark state of rod photoreceptors following light exposure. May be involved in cone photoreceptor light response and recovery of response in bright light. This is Guanylyl cyclase-activating protein 1 (Guca1a) from Mus musculus (Mouse).